The sequence spans 128 residues: Probable 4-amino-4-deoxy-L-arabinose-phosphoundecaprenol flippase subunit ArnF (128 aa).

Residues 1-2 (MC) lie on the Cytoplasmic side of the membrane. A helical transmembrane segment spans residues 3–23 (LIWGLFSVIIASVAQLSLGFA). Residues 24–35 (ASHLPPMTHLWD) are Periplasmic-facing. The helical transmembrane segment at 36-56 (FIAALLAFGLDARILLLGLLG) threads the bilayer. Residues 57-76 (YLLSVFCWYKTLHKLALSKA) are Cytoplasmic-facing. A helical transmembrane segment spans residues 77 to 97 (YALLSMSYVLVWIASMVLPGW). Residues 98–100 (EGT) lie on the Periplasmic side of the membrane. A helical transmembrane segment spans residues 101–121 (FSLKALLGVACIMSGLMLIFL). The Cytoplasmic portion of the chain corresponds to 122 to 128 (PTTKQRY).

It belongs to the ArnF family. As to quaternary structure, heterodimer of ArnE and ArnF.

It localises to the cell inner membrane. The protein operates within bacterial outer membrane biogenesis; lipopolysaccharide biosynthesis. Functionally, translocates 4-amino-4-deoxy-L-arabinose-phosphoundecaprenol (alpha-L-Ara4N-phosphoundecaprenol) from the cytoplasmic to the periplasmic side of the inner membrane. This chain is Probable 4-amino-4-deoxy-L-arabinose-phosphoundecaprenol flippase subunit ArnF, found in Shigella flexneri.